The primary structure comprises 448 residues: Argininosuccinate synthase (448 aa).

Residues 17-25 and A43 each bind ATP; that span reads AFSGGLDTS. Residue Y99 coordinates L-citrulline. The ATP site is built by G129 and T131. The L-aspartate site is built by T131, N135, and D136. N135 contacts L-citrulline. D136 contacts ATP. R139 and S192 together coordinate L-citrulline. D194 is an ATP binding site. L-citrulline contacts are provided by T201, E203, and E280.

This sequence belongs to the argininosuccinate synthase family. Type 2 subfamily. As to quaternary structure, homotetramer.

The protein localises to the cytoplasm. The enzyme catalyses L-citrulline + L-aspartate + ATP = 2-(N(omega)-L-arginino)succinate + AMP + diphosphate + H(+). The protein operates within amino-acid biosynthesis; L-arginine biosynthesis; L-arginine from L-ornithine and carbamoyl phosphate: step 2/3. The protein is Argininosuccinate synthase of Enterobacter sp. (strain 638).